Consider the following 123-residue polypeptide: Small ribosomal subunit protein uS13 (123 aa).

The tract at residues 93 to 123 is disordered; sequence RRNLPVRGQKTKTNARTRKGPKRAIGGKKKK.

Belongs to the universal ribosomal protein uS13 family. As to quaternary structure, part of the 30S ribosomal subunit. Forms a loose heterodimer with protein S19. Forms two bridges to the 50S subunit in the 70S ribosome.

Its function is as follows. Located at the top of the head of the 30S subunit, it contacts several helices of the 16S rRNA. In the 70S ribosome it contacts the 23S rRNA (bridge B1a) and protein L5 of the 50S subunit (bridge B1b), connecting the 2 subunits; these bridges are implicated in subunit movement. Contacts the tRNAs in the A and P-sites. The chain is Small ribosomal subunit protein uS13 from Clostridium botulinum (strain Kyoto / Type A2).